Consider the following 508-residue polypeptide: MKHILLSCVESRIEHNRSFYSRFQLGPFDLGQGLTVGNAFRRTLLSELSGVGITLIEIDGVCHEYSTLPGVRESVLDILLNLKQLVLTSDTTFTVPQVGYLNFTGPGVVTAKDLKLPVSVYCVDPDQPIATLSADATLNFKFLVCQGKNYIIQTPVDKFHEYQKKILNSKLNLPLSSRTTLNSTFERPNQDSLVGTPLQEGVGKTKQNKRLNAHFQRQLKQLNRLKETSFKAYKTKVGEKTISDEFQTNSVNHQNLTTFDLREKKLTDVTTSLQHGEEATLLKEEGLNKLDNSSPQLENKLKGGRDFSGGSQLASQALPVDTLFMPIKKVNYMIDIDPAEPDRESVVLEIWTNGSIHPRQAVHEAAKQLIHLFSPFLQTHLVPTTLQSTPYSKAASKTQEFSLNETSTEKVKDELGKVAFGSENNTAALNQQKNLVTAIQTLDIANLNFSLRTFTFLKKENINTVSELVEFWTRQKTEAKDSIQSNVQSSVLLEISNNLKNFGVLPTS.

The interval 1 to 380 (MKHILLSCVE…HLFSPFLQTH (380 aa)) is alpha N-terminal domain (alpha-NTD). Residues 434–508 (NLVTAIQTLD…LKNFGVLPTS (75 aa)) form an alpha C-terminal domain (alpha-CTD) region.

It belongs to the RNA polymerase alpha chain family. As to quaternary structure, in plastids the minimal PEP RNA polymerase catalytic core is composed of four subunits: alpha, beta, beta', and beta''. When a (nuclear-encoded) sigma factor is associated with the core the holoenzyme is formed, which can initiate transcription.

The protein localises to the plastid. Its subcellular location is the chloroplast. The catalysed reaction is RNA(n) + a ribonucleoside 5'-triphosphate = RNA(n+1) + diphosphate. DNA-dependent RNA polymerase catalyzes the transcription of DNA into RNA using the four ribonucleoside triphosphates as substrates. The chain is DNA-directed RNA polymerase subunit alpha (rpoA) from Oltmannsiellopsis viridis (Marine flagellate).